We begin with the raw amino-acid sequence, 417 residues long: Serine hydroxymethyltransferase (417 aa).

Residues Leu-121 and 125-127 (GHL) each bind (6S)-5,6,7,8-tetrahydrofolate. Lys-229 is subject to N6-(pyridoxal phosphate)lysine. 355–357 (SPF) contributes to the (6S)-5,6,7,8-tetrahydrofolate binding site.

Belongs to the SHMT family. As to quaternary structure, homodimer. It depends on pyridoxal 5'-phosphate as a cofactor.

It is found in the cytoplasm. The catalysed reaction is (6R)-5,10-methylene-5,6,7,8-tetrahydrofolate + glycine + H2O = (6S)-5,6,7,8-tetrahydrofolate + L-serine. The protein operates within one-carbon metabolism; tetrahydrofolate interconversion. It functions in the pathway amino-acid biosynthesis; glycine biosynthesis; glycine from L-serine: step 1/1. In terms of biological role, catalyzes the reversible interconversion of serine and glycine with tetrahydrofolate (THF) serving as the one-carbon carrier. This reaction serves as the major source of one-carbon groups required for the biosynthesis of purines, thymidylate, methionine, and other important biomolecules. Also exhibits THF-independent aldolase activity toward beta-hydroxyamino acids, producing glycine and aldehydes, via a retro-aldol mechanism. The chain is Serine hydroxymethyltransferase from Serratia proteamaculans (strain 568).